Reading from the N-terminus, the 447-residue chain is Tryptophan synthase beta chain (447 aa).

K92 is modified (N6-(pyridoxal phosphate)lysine). The interval 408–447 is disordered; that stretch reads GLAVKGGEQPKEFSDGPPLGKLAPSGGSAVREATSVGARK.

The protein belongs to the TrpB family. Tetramer of two alpha and two beta chains. The cofactor is pyridoxal 5'-phosphate.

It carries out the reaction (1S,2R)-1-C-(indol-3-yl)glycerol 3-phosphate + L-serine = D-glyceraldehyde 3-phosphate + L-tryptophan + H2O. Its pathway is amino-acid biosynthesis; L-tryptophan biosynthesis; L-tryptophan from chorismate: step 5/5. In terms of biological role, the beta subunit is responsible for the synthesis of L-tryptophan from indole and L-serine. The chain is Tryptophan synthase beta chain from Polaromonas sp. (strain JS666 / ATCC BAA-500).